The chain runs to 879 residues: Prostaglandin F2 receptor negative regulator (879 aa).

The N-terminal stretch at 1-21 is a signal peptide; that stretch reads MGRPAPRPLLLALLSLAVCRG. Ig-like C2-type domains are found at residues 22–129 and 149–268; these read RVVR…ATVQ and PSSR…KAVE. Residues 22–832 are Extracellular-facing; sequence RVVRVPAGTL…MDVLNAFKYP (811 aa). 2 disulfide bridges follow: Cys-43-Cys-119 and Cys-169-Cys-247. The N-linked (GlcNAc...) asparagine glycan is linked to Asn-44. The Cell attachment site motif lies at 89-91; sequence RGD. The residue at position 271 (Thr-271) is a Phosphothreonine. Ig-like C2-type domains are found at residues 276–389, 406–527, 544–662, and 688–813; these read PTAL…WHKV, PEYQ…RNSS, ASED…AWSP, and PIFN…AEIH. An intrachain disulfide couples Cys-299 to Cys-373. Residues Asn-300, Asn-383, and Asn-413 are each glycosylated (N-linked (GlcNAc...) asparagine). Residues 424–427 carry the Endoplasmic reticulum retention signal motif; the sequence is PTEL. A disulfide bridge connects residues Cys-429 and Cys-515. Asn-525, Asn-600, Asn-618, and Asn-691 each carry an N-linked (GlcNAc...) asparagine glycan. A disulfide bond links Cys-571 and Cys-655. A Cell attachment site motif is present at residues 703-705; sequence RGD. Cys-711 and Cys-793 are oxidised to a cystine. Residues 833-853 form a helical membrane-spanning segment; that stretch reads LLIGVGLSTVIGLLSCLIGYC. At 854–879 the chain is on the cytoplasmic side; it reads SSHWCCKKEVRETRRERRRLMSMEMD.

Interacts with CD9 and CD81. Part of a complex composed of CD9, CD81 and IGSF8. Also seems to interact with CD63, CD82 and CD151. Reproductive tissues, lung and heart.

It is found in the endoplasmic reticulum membrane. The protein resides in the golgi apparatus. The protein localises to the trans-Golgi network membrane. Its function is as follows. Inhibits the binding of prostaglandin F2-alpha (PGF2-alpha) to its specific FP receptor, by decreasing the receptor number rather than the affinity constant. Functional coupling with the prostaglandin F2-alpha receptor seems to occur. In myoblasts, associates with tetraspanins CD9 and CD81 to prevent myotube fusion during muscle regeneration. This Rattus norvegicus (Rat) protein is Prostaglandin F2 receptor negative regulator (Ptgfrn).